Reading from the N-terminus, the 189-residue chain is Interferon alpha-5 (189 aa).

The signal sequence occupies residues 1–23 (MARLCAFLMVLPVLSYWPTCSLG). Intrachain disulfides connect C24-C122 and C52-C162. N101 carries an N-linked (GlcNAc...) asparagine glycan.

Belongs to the alpha/beta interferon family.

Its subcellular location is the secreted. Its function is as follows. Produced by macrophages, IFN-alpha have antiviral activities. Interferon stimulates the production of two enzymes: a protein kinase and an oligoadenylate synthetase. The sequence is that of Interferon alpha-5 (Ifna5) from Mus musculus (Mouse).